Consider the following 543-residue polypeptide: Zinc finger protein 280B (543 aa).

Met-1 is subject to N-acetylmethionine. Over residues 1-10 the composition is skewed to acidic residues; that stretch reads MEQSCEEEKE. The segment at 1 to 23 is disordered; that stretch reads MEQSCEEEKEPEPQKNIQETKQV. Phosphoserine occurs at positions 68 and 70. A disordered region spans residues 105-138; that stretch reads SQLESRSTDSPIIIEPLSKPDYRNSSPQVVPNNS. A compositionally biased stretch (low complexity) spans 128–138; it reads NSSPQVVPNNS. Glycyl lysine isopeptide (Lys-Gly) (interchain with G-Cter in SUMO2) cross-links involve residues Lys-173, Lys-247, and Lys-261. C2H2-type zinc fingers lie at residues 343 to 366, 373 to 396, 432 to 454, and 460 to 483; these read TTCQ…ENVH, TVCK…KDHH, LLCP…YRGH, and HQCS…TQCH. The segment at 518–543 is disordered; sequence ASITVSTSDSEPSLPRSKSKISKKSH. The segment covering 534 to 543 has biased composition (basic residues); that stretch reads SKSKISKKSH.

It localises to the nucleus. Its function is as follows. May function as a transcription factor. This chain is Zinc finger protein 280B (ZNF280B), found in Homo sapiens (Human).